The chain runs to 282 residues: HTH-type transcriptional activator RhaR (282 aa).

One can recognise an HTH araC/xylS-type domain in the interval 179-277; it reads DKLITALANS…GMTPSQWRHL (99 aa). DNA-binding regions (H-T-H motif) lie at residues 196–217 and 244–267; these read DAFC…RAQT and VSEI…TRET.

Binds DNA as a dimer.

The protein localises to the cytoplasm. In terms of biological role, activates expression of the rhaSR operon in response to L-rhamnose. The protein is HTH-type transcriptional activator RhaR of Salmonella typhi.